A 112-amino-acid polypeptide reads, in one-letter code: Gastrula zinc finger protein XlCGF16.1 (112 aa).

4 C2H2-type zinc fingers span residues 6 to 28 (YNCSECHKRFRSKSGFVKHQKTH), 34 to 56 (FVCFVCEQRFVCHSALIGHQRIH), 62 to 84 (FSCTECGKCFSRRSHLNSHHKTH), and 90 to 112 (FLCFACGKCFASRSHLTAHHRTH).

This sequence belongs to the krueppel C2H2-type zinc-finger protein family.

Its subcellular location is the nucleus. May be involved in transcriptional regulation. This chain is Gastrula zinc finger protein XlCGF16.1, found in Xenopus laevis (African clawed frog).